A 449-amino-acid chain; its full sequence is Aminopeptidase C (449 aa).

Catalysis depends on residues C70, H364, and N385.

It belongs to the peptidase C1 family. Homohexamer.

The protein resides in the cytoplasm. The enzyme catalyses Inactivates bleomycin B2 (a cytotoxic glycometallopeptide) by hydrolysis of a carboxyamide bond of beta-aminoalanine, but also shows general aminopeptidase activity. The specificity varies somewhat with source, but amino acid arylamides of Met, Leu and Ala are preferred.. The chain is Aminopeptidase C (pepC) from Lactobacillus delbrueckii subsp. lactis.